A 596-amino-acid chain; its full sequence is MKHIRNFSIIAHIDHGKSTLSDRLIQVCGGLTDREMAAQVLDSMDLERERGITIKAQSVTLDYHAKDGNTYLLNFIDTPGHVDFSYEVSRSLAACEGALLVVDAGQGVEAQTLANCYTALEMNLDVVPVLNKIDLPQAEPDRVAAEIEDIVGIDAMDAVRCSAKTGVGVDLVLEEIIAKIPPPVGDESAPLQALIIDSWFDAYLGVVSLVRIKNGILKKGEKFKVMSTGQNYNADRVGIFTPKEKDKTELRAGEVGYVISGIKEIHGAPVGDTLTHAKHGADKPLPGFKRVKPQVYAGVFPISTDEYESFRDALNKLSLNDASLFFEPETSSALGFGFRIGYLGLLHMEIVQERLEREYNLDLITTAPTVVYEVIMNNGETIYVDNPSGLPALNNIEEIREPIVEANILVPKEYLGNVITLCIEKRGSQTNMVYHGNQVAVTYHLPMAEVVMDFFDRLKSTSRGYASLEYNFIRFDPADMVRLDILINGDRVDALAMIIHRSNIRHRGLALVEKMKELIPRQMFDIAIQAAVGSQIIARSSIKALRKDVTAKCYGGDVSRKKKLLNKQKEGKKRMKQVGNVEVPQEAFLAVLKLND.

In terms of domain architecture, tr-type G spans 2-184 (KHIRNFSIIA…EIIAKIPPPV (183 aa)). Residues 14 to 19 (DHGKST) and 131 to 134 (NKID) each bind GTP.

It belongs to the TRAFAC class translation factor GTPase superfamily. Classic translation factor GTPase family. LepA subfamily.

It is found in the cell inner membrane. The enzyme catalyses GTP + H2O = GDP + phosphate + H(+). Functionally, required for accurate and efficient protein synthesis under certain stress conditions. May act as a fidelity factor of the translation reaction, by catalyzing a one-codon backward translocation of tRNAs on improperly translocated ribosomes. Back-translocation proceeds from a post-translocation (POST) complex to a pre-translocation (PRE) complex, thus giving elongation factor G a second chance to translocate the tRNAs correctly. Binds to ribosomes in a GTP-dependent manner. This Shewanella frigidimarina (strain NCIMB 400) protein is Elongation factor 4.